The chain runs to 468 residues: Nuclear receptor ROR-alpha A (468 aa).

The segment at residues 15-90 (IIPCKICGDK…VGMSRDAVKF (76 aa)) is a DNA-binding region (nuclear receptor). 2 consecutive NR C4-type zinc fingers follow at residues 18-38 (CKIC…CEGC) and 54-73 (CPRQ…CQHC). 2 disordered regions span residues 101–129 (LYAE…PLTP) and 142–163 (HDDL…DSGV). Residues 217–455 (ELEHLAQNIS…AHFPPLYKEL (239 aa)) form the NR LBD domain. An AF-2 region spans residues 444-455 (VRAHFPPLYKEL).

This sequence belongs to the nuclear hormone receptor family. NR1 subfamily. As to expression, expressed in the brain, in cerebellar-like structures, including Purkinje cells.

The protein localises to the nucleus. Nuclear receptor that binds DNA as a monomer to ROR response elements (RORE). Required for proper cerebellum development. This Danio rerio (Zebrafish) protein is Nuclear receptor ROR-alpha A (roraa).